The primary structure comprises 579 residues: Arginine--tRNA ligase (579 aa).

A 'HIGH' region motif is present at residues 127–137; that stretch reads PNLAKEMHVGH.

The protein belongs to the class-I aminoacyl-tRNA synthetase family. As to quaternary structure, monomer.

Its subcellular location is the cytoplasm. The catalysed reaction is tRNA(Arg) + L-arginine + ATP = L-arginyl-tRNA(Arg) + AMP + diphosphate. This is Arginine--tRNA ligase from Ectopseudomonas mendocina (strain ymp) (Pseudomonas mendocina).